Reading from the N-terminus, the 293-residue chain is Pyridoxal 5'-phosphate synthase subunit PdxS (293 aa).

D-ribose 5-phosphate is bound at residue Asp-23. Lys-80 functions as the Schiff-base intermediate with D-ribose 5-phosphate in the catalytic mechanism. Residue Gly-152 coordinates D-ribose 5-phosphate. Arg-164 lines the D-glyceraldehyde 3-phosphate pocket. D-ribose 5-phosphate is bound by residues Gly-213 and 234–235; that span reads GS.

It belongs to the PdxS/SNZ family. In the presence of PdxT, forms a dodecamer of heterodimers.

It catalyses the reaction aldehydo-D-ribose 5-phosphate + D-glyceraldehyde 3-phosphate + L-glutamine = pyridoxal 5'-phosphate + L-glutamate + phosphate + 3 H2O + H(+). The protein operates within cofactor biosynthesis; pyridoxal 5'-phosphate biosynthesis. In terms of biological role, catalyzes the formation of pyridoxal 5'-phosphate from ribose 5-phosphate (RBP), glyceraldehyde 3-phosphate (G3P) and ammonia. The ammonia is provided by the PdxT subunit. Can also use ribulose 5-phosphate and dihydroxyacetone phosphate as substrates, resulting from enzyme-catalyzed isomerization of RBP and G3P, respectively. The chain is Pyridoxal 5'-phosphate synthase subunit PdxS from Herpetosiphon aurantiacus (strain ATCC 23779 / DSM 785 / 114-95).